A 379-amino-acid chain; its full sequence is Spermidine/putrescine import ATP-binding protein PotA (379 aa).

In terms of domain architecture, ABC transporter spans 10–240; that stretch reads VTIDQVSKAY…PATDFVAKFI (231 aa). Residue 42-49 participates in ATP binding; that stretch reads GPSGCGKT.

Belongs to the ABC transporter superfamily. Spermidine/putrescine importer (TC 3.A.1.11.1) family. In terms of assembly, the complex is composed of two ATP-binding proteins (PotA), two transmembrane proteins (PotB and PotC) and a solute-binding protein (PotD).

The protein localises to the cell inner membrane. It catalyses the reaction ATP + H2O + polyamine-[polyamine-binding protein]Side 1 = ADP + phosphate + polyamineSide 2 + [polyamine-binding protein]Side 1.. In terms of biological role, part of the ABC transporter complex PotABCD involved in spermidine/putrescine import. Responsible for energy coupling to the transport system. This Treponema pallidum (strain Nichols) protein is Spermidine/putrescine import ATP-binding protein PotA.